The sequence spans 288 residues: Acetyl-coenzyme A carboxylase carboxyl transferase subunit beta (288 aa).

Positions 34-288 constitute a CoA carboxyltransferase N-terminal domain; sequence LFSKCPACKV…RLLRMHGGVR (255 aa). Zn(2+) contacts are provided by cysteine 38, cysteine 41, cysteine 56, and cysteine 59. The C4-type zinc-finger motif lies at 38–59; the sequence is CPACKVILYKNDLGLEKTCQHC.

This sequence belongs to the AccD/PCCB family. In terms of assembly, acetyl-CoA carboxylase is a heterohexamer composed of biotin carboxyl carrier protein (AccB), biotin carboxylase (AccC) and two subunits each of ACCase subunit alpha (AccA) and ACCase subunit beta (AccD). Requires Zn(2+) as cofactor.

Its subcellular location is the cytoplasm. The catalysed reaction is N(6)-carboxybiotinyl-L-lysyl-[protein] + acetyl-CoA = N(6)-biotinyl-L-lysyl-[protein] + malonyl-CoA. It participates in lipid metabolism; malonyl-CoA biosynthesis; malonyl-CoA from acetyl-CoA: step 1/1. In terms of biological role, component of the acetyl coenzyme A carboxylase (ACC) complex. Biotin carboxylase (BC) catalyzes the carboxylation of biotin on its carrier protein (BCCP) and then the CO(2) group is transferred by the transcarboxylase to acetyl-CoA to form malonyl-CoA. The sequence is that of Acetyl-coenzyme A carboxylase carboxyl transferase subunit beta from Streptococcus suis (strain 98HAH33).